Here is a 343-residue protein sequence, read N- to C-terminus: Probable dolichyl-diphosphooligosaccharide--protein glycosyltransferase subunit 3A (343 aa).

The signal sequence occupies residues 1-22 (MVIQTNLSYRFFILIVFLFTLA). Residues 23-185 (NPKSDSDLKN…TVCSIQRPPL (163 aa)) are Lumenal-facing. Residues Asn-105, Asn-108, and Asn-146 are each glycosylated (N-linked (GlcNAc...) asparagine). The chain crosses the membrane as a helical span at residues 186 to 206 (ISKTQIGIIVAIIIISTPILI). Residues 207–220 (KKILKGETLLHDHR) lie on the Cytoplasmic side of the membrane. A helical membrane pass occupies residues 221 to 241 (IWLVGAVFVYFFSVSGTMHNI). At 242–273 (IREMPMYIKDYEDSSKFVFFIEESEMQLGAEG) the chain is on the lumenal side. The helical transmembrane segment at 274–294 (FFVGFLYTVVGLLLAFVTNVV) threads the bilayer. Residues 295 to 304 (VRVKKLDEQR) are Cytoplasmic-facing. Residues 305-325 (MAMLLALSISFWAVRKVVYLD) traverse the membrane as a helical segment. The Lumenal segment spans residues 326–343 (NWKTGYEIYPYWPSSWRG).

It belongs to the OST3/OST6 family. Component of the oligosaccharyltransferase (OST) complex.

It is found in the endoplasmic reticulum membrane. Subunit of the oligosaccharyl transferase (OST) complex that catalyzes the initial transfer of a defined glycan (Glc(3)Man(9)GlcNAc(2) in eukaryotes) from the lipid carrier dolichol-pyrophosphate to an asparagine residue within an Asn-X-Ser/Thr consensus motif in nascent polypeptide chains, the first step in protein N-glycosylation. N-glycosylation occurs cotranslationally and the complex associates with the Sec61 complex at the channel-forming translocon complex that mediates protein translocation across the endoplasmic reticulum (ER). All subunits are required for a maximal enzyme activity. This chain is Probable dolichyl-diphosphooligosaccharide--protein glycosyltransferase subunit 3A (OST3A), found in Arabidopsis thaliana (Mouse-ear cress).